Consider the following 546-residue polypeptide: Phosphoglucomutase (546 aa).

Catalysis depends on serine 135, which acts as the Phosphoserine intermediate. 4 residues coordinate Mg(2+): serine 135, aspartate 288, aspartate 290, and aspartate 292.

This sequence belongs to the phosphohexose mutase family. Mg(2+) is required as a cofactor.

It catalyses the reaction alpha-D-glucose 1-phosphate = alpha-D-glucose 6-phosphate. Its pathway is glycolipid metabolism; diglucosyl-diacylglycerol biosynthesis. In terms of biological role, catalyzes the interconversion between glucose-6-phosphate and alpha-glucose-1-phosphate. This is the first step in the biosynthesis of diglucosyl-diacylglycerol (Glc2-DAG), i.e. a glycolipid found in the membrane, which is also used as a membrane anchor for lipoteichoic acid (LTA). In Staphylococcus epidermidis (strain ATCC 12228 / FDA PCI 1200), this protein is Phosphoglucomutase (pgcA).